Consider the following 507-residue polypeptide: Maturase K (507 aa).

Belongs to the intron maturase 2 family. MatK subfamily.

The protein resides in the plastid. The protein localises to the chloroplast. Functionally, usually encoded in the trnK tRNA gene intron. Probably assists in splicing its own and other chloroplast group II introns. The sequence is that of Maturase K from Kalmia buxifolia (Sand myrtle).